Reading from the N-terminus, the 598-residue chain is Elongation factor 4 (598 aa).

The region spanning 4-186 is the tr-type G domain; the sequence is SHIRNFAIIA…AIVSRLPAPS (183 aa). GTP-binding positions include 16–21 and 133–136; these read DHGKST and NKID.

Belongs to the TRAFAC class translation factor GTPase superfamily. Classic translation factor GTPase family. LepA subfamily.

It is found in the cell inner membrane. It catalyses the reaction GTP + H2O = GDP + phosphate + H(+). In terms of biological role, required for accurate and efficient protein synthesis under certain stress conditions. May act as a fidelity factor of the translation reaction, by catalyzing a one-codon backward translocation of tRNAs on improperly translocated ribosomes. Back-translocation proceeds from a post-translocation (POST) complex to a pre-translocation (PRE) complex, thus giving elongation factor G a second chance to translocate the tRNAs correctly. Binds to ribosomes in a GTP-dependent manner. The sequence is that of Elongation factor 4 from Ehrlichia chaffeensis (strain ATCC CRL-10679 / Arkansas).